Reading from the N-terminus, the 454-residue chain is Inner membrane permease YgbN (454 aa).

Position 1 (M1) is a topological domain, periplasmic. The helical transmembrane segment at 2–22 (STITLLCIALAGVIMLLLLVI) threads the bilayer. Residues 23–27 (KAKVQ) are Cytoplasmic-facing. A helical membrane pass occupies residues 28–48 (PFVALLLVSLLVALAAGIPAG). Over 49–52 (EVGK) the chain is Periplasmic. The chain crosses the membrane as a helical span at residues 53–73 (VMIAGMGGVLGSVTIIIGLGA). Residues 74–108 (MLGRMIEHSGGAESLANYFSRKLGDKRTIAALTLA) are Cytoplasmic-facing. A helical membrane pass occupies residues 109 to 129 (AFFLGIPVFFDVGFIILAPII). The Periplasmic portion of the chain corresponds to 130-137 (YGFAKVAK). A helical transmembrane segment spans residues 138 to 158 (ISPLKFGLPVAGIMLTVHVAV). At 159 to 174 (PPHPGPVAAAGLLHAD) the chain is on the cytoplasmic side. Residues 175-195 (IGWLTIIGIAISIPVGVVGYF) traverse the membrane as a helical segment. Residues 196–235 (AAKIINKRQYAMSVEVLEQMQLAPASEEGATKLSDKINPP) lie on the Periplasmic side of the membrane. A helical transmembrane segment spans residues 236–256 (GVALVTSLIVIPIAIIMAGTV). Residues 257–273 (SATLMPPSHPLLGTLQL) lie on the Cytoplasmic side of the membrane. Residues 274–294 (IGSPMVALMIALVLAFWLLAL) traverse the membrane as a helical segment. Over 295-305 (RRGWSLQHTSD) the chain is Periplasmic. Residues 306 to 326 (IMGSALPTAAVVILVTGAGGV) form a helical membrane-spanning segment. The Cytoplasmic segment spans residues 327 to 341 (FGKVLVESGVGKALA). The chain crosses the membrane as a helical span at residues 342 to 362 (NMLQMIDLPLLPAAFIISLAL). The Periplasmic portion of the chain corresponds to 363 to 383 (RASQGSATVAILTTGGLLSEA). A helical membrane pass occupies residues 384-404 (VMGLNPIQCVLVTLAACFGGL). The Cytoplasmic portion of the chain corresponds to 405 to 433 (GASHINDSGFWIVTKYLGLSVADGLKTWT). The helical transmembrane segment at 434 to 454 (VLTTILGFTGFLITWCVWAVI) threads the bilayer.

It belongs to the GntP permease family.

Its subcellular location is the cell inner membrane. The polypeptide is Inner membrane permease YgbN (ygbN) (Escherichia coli (strain K12)).